Consider the following 320-residue polypeptide: tRNA (guanosine(34)-2'-O)-methyltransferase (320 aa).

5 residues coordinate S-adenosyl-L-methionine: glycine 53, tryptophan 55, aspartate 81, aspartate 97, and aspartate 122. Lysine 162 functions as the Proton acceptor in the catalytic mechanism.

Belongs to the class I-like SAM-binding methyltransferase superfamily. RNA methyltransferase RlmE family. TRM7 subfamily. In terms of assembly, interacts with CG33172/WDR6.

It localises to the cytoplasm. The enzyme catalyses cytidine(32)/guanosine(34) in tRNA + 2 S-adenosyl-L-methionine = 2'-O-methylcytidine(32)/2'-O-methylguanosine(34) in tRNA + 2 S-adenosyl-L-homocysteine + 2 H(+). In terms of biological role, methylates the 2'-O-ribose of nucleotides at position 34 of the tRNA anticodon loop of substrate tRNAs. May require WDR6 for methylation of the nucleotide at position 34 of the anticodon loop of substrate tRNAs. Plays a role in neurogenesis. Requisite for RNA-mediated gene silencing. Modifies position 34 in tRNA(Leu(CAA)), tRNA(Leu(CAG)), tRNA(Phe(GAA)), and tRNA(Trp(CCA)). In Drosophila melanogaster (Fruit fly), this protein is tRNA (guanosine(34)-2'-O)-methyltransferase.